A 70-amino-acid polypeptide reads, in one-letter code: Ribosome modulation factor (70 aa).

The protein belongs to the ribosome modulation factor family.

It localises to the cytoplasm. During stationary phase, converts 70S ribosomes to an inactive dimeric form (100S ribosomes). The polypeptide is Ribosome modulation factor (Marinobacter adhaerens (strain DSM 23420 / HP15)).